The chain runs to 661 residues: Zeaxanthin epoxidase, chloroplastic (661 aa).

Residues 1–50 (MASTLFYNSMNLSAAVFSRTHFPIPINKDFPLEFSPCIHTDYHLRSRTRS) constitute a chloroplast transit peptide. Residues 82-110 (RILV…VVFE) and 360-373 (ILTW…LLGD) each bind FAD. The FHA domain maps to 558-607 (CIIGSAPHGDVSGISIAIPKPQVSEMHARISYKDGAFYLTDLRSEHGTWI).

Requires FAD as cofactor.

It localises to the plastid. The protein localises to the chloroplast. It catalyses the reaction all-trans-zeaxanthin + 4 reduced [2Fe-2S]-[ferredoxin] + 2 O2 + 4 H(+) = all-trans-violaxanthin + 4 oxidized [2Fe-2S]-[ferredoxin] + 2 H2O. It participates in plant hormone biosynthesis; abscisate biosynthesis. Converts zeaxanthin into antheraxanthin and subsequently violaxanthin. Involved in the epoxidation of zeaxanthin. This Prunus armeniaca (Apricot) protein is Zeaxanthin epoxidase, chloroplastic.